The chain runs to 483 residues: SWI/SNF-related matrix-associated actin-dependent regulator of chromatin subfamily D member 3 (483 aa).

Ala-2 carries the post-translational modification N-acetylalanine. The disordered stretch occupies residues 26–102 (VRPGMPSGAR…ARSRSAKRRK (77 aa)). Residues 78–87 (QSQAQSQGQP) are compositionally biased toward low complexity. At Ser-178 the chain carries Phosphoserine. Residues 258-335 (YQPPQFKLDP…PQRLTALLLP (78 aa)) form the SWIB/MDM2 domain.

It belongs to the SMARCD family. As to quaternary structure, component of the multiprotein chromatin-remodeling complexes SWI/SNF: SWI/SNF-A (BAF), SWI/SNF-B (PBAF) and related complexes. The canonical complex contains a catalytic subunit (either SMARCA4/BRG1/BAF190A or SMARCA2/BRM/BAF190B) and at least SMARCE1, ACTL6A/BAF53, SMARCC1/BAF155, SMARCC2/BAF170, and SMARCB1/SNF5/BAF47. Other subunits specific to each of the complexes may also be present permitting several possible combinations developmentally and tissue specific. Component of the BAF complex, which includes at least actin (ACTB), ARID1A/BAF250A, ARID1B/BAF250B, SMARCA2/BRM, SMARCA4/BRG1/BAF190A, ACTL6A/BAF53, ACTL6B/BAF53B, SMARCE1/BAF57, SMARCC1/BAF155, SMARCC2/BAF170, SMARCB1/SNF5/INI1, and one or more SMARCD1/BAF60A, SMARCD2/BAF60B, or SMARCD3/BAF60C. In muscle cells, the BAF complex also contains DPF3. Component of neural progenitors-specific chromatin remodeling complex (npBAF complex) composed of at least, ARID1A/BAF250A or ARID1B/BAF250B, SMARCD1/BAF60A, SMARCD3/BAF60C, SMARCA2/BRM/BAF190B, SMARCA4/BRG1/BAF190A, SMARCB1/BAF47, SMARCC1/BAF155, SMARCE1/BAF57, SMARCC2/BAF170, PHF10/BAF45A, ACTL6A/BAF53A and actin. Component of neuron-specific chromatin remodeling complex (nBAF complex) composed of at least, ARID1A/BAF250A or ARID1B/BAF250B, SMARCD1/BAF60A, SMARCD3/BAF60C, SMARCA2/BRM/BAF190B, SMARCA4/BRG1/BAF190A, SMARCB1/BAF47, SMARCC1/BAF155, SMARCE1/BAF57, SMARCC2/BAF170, DPF1/BAF45B, DPF3/BAF45C, ACTL6B/BAF53B and actin. May be a component of the SWI/SNF-B (PBAF) chromatin remodeling complex, at least composed of SMARCA4/BRG1, SMARCB1/BAF47/SNF5, ACTL6A/BAF53A or ACTL6B/BAF53B, SMARCE1/BAF57, SMARCD1/BAF60A, SMARCD2/BAF60B, perhaps SMARCD3/BAF60C, SMARCC1/BAF155, SMARCC2/BAF170, PBRM1/BAF180, ARID2/BAF200 and actin. Interacts with SMARCA4/BRG1/BAF190A. Component of SWI/SNF (GBAF) subcomplex, which includes at least BICRA or BICRAL (mutually exclusive), BRD9, SS18, SMARCA2/BRM, SMARCA4/BRG1/BAF190A, ACTL6A/BAF53, SMARCC1/BAF155, and SMARCD1/BAF60A. The precise distribution of the related SMARCD1, SMARCD2 and SMARCD3 proteins among these and other SWI/SNF nucleosome-remodeling complexes is not fully known. May allow recruitment of SWI/SNF containing complexes specifically to promoters where these factors are located. Also interacts with several nuclear receptors including PPARG/NR1C3, RXRA/NR1F1, ESR1, NR5A1, NR5A2/LRH1 and other transcriptional activators including the HLH protein SREBF1/SREBP1 and the homeobox protein PBX1. Interacts with PRDM1/BLIMP1. Isoform 2 and isoform 1 are expressed in brain, heart, kidney, placenta, prostate, salivary gland, spleen, testis, thyroid, trachea and uterus. Isoform 1 is also expressed in skeletal muscle and adipose tissue.

It localises to the nucleus. Functionally, involved in transcriptional activation and repression of select genes by chromatin remodeling (alteration of DNA-nucleosome topology). Component of SWI/SNF chromatin remodeling complexes that carry out key enzymatic activities, changing chromatin structure by altering DNA-histone contacts within a nucleosome in an ATP-dependent manner. Stimulates nuclear receptor mediated transcription. Belongs to the neural progenitors-specific chromatin remodeling complex (npBAF complex) and the neuron-specific chromatin remodeling complex (nBAF complex). During neural development a switch from a stem/progenitor to a postmitotic chromatin remodeling mechanism occurs as neurons exit the cell cycle and become committed to their adult state. The transition from proliferating neural stem/progenitor cells to postmitotic neurons requires a switch in subunit composition of the npBAF and nBAF complexes. As neural progenitors exit mitosis and differentiate into neurons, npBAF complexes which contain ACTL6A/BAF53A and PHF10/BAF45A, are exchanged for homologous alternative ACTL6B/BAF53B and DPF1/BAF45B or DPF3/BAF45C subunits in neuron-specific complexes (nBAF). The npBAF complex is essential for the self-renewal/proliferative capacity of the multipotent neural stem cells. The nBAF complex along with CREST plays a role regulating the activity of genes essential for dendrite growth. The chain is SWI/SNF-related matrix-associated actin-dependent regulator of chromatin subfamily D member 3 (SMARCD3) from Homo sapiens (Human).